A 483-amino-acid polypeptide reads, in one-letter code: Glutamyl-tRNA(Gln) amidotransferase subunit A (483 aa).

Catalysis depends on charge relay system residues Lys-76 and Ser-151. Ser-175 (acyl-ester intermediate) is an active-site residue.

It belongs to the amidase family. GatA subfamily. In terms of assembly, heterotrimer of A, B and C subunits.

It catalyses the reaction L-glutamyl-tRNA(Gln) + L-glutamine + ATP + H2O = L-glutaminyl-tRNA(Gln) + L-glutamate + ADP + phosphate + H(+). In terms of biological role, allows the formation of correctly charged Gln-tRNA(Gln) through the transamidation of misacylated Glu-tRNA(Gln) in organisms which lack glutaminyl-tRNA synthetase. The reaction takes place in the presence of glutamine and ATP through an activated gamma-phospho-Glu-tRNA(Gln). The polypeptide is Glutamyl-tRNA(Gln) amidotransferase subunit A (Pseudomonas putida (strain ATCC 47054 / DSM 6125 / CFBP 8728 / NCIMB 11950 / KT2440)).